The primary structure comprises 596 residues: V-type ATP synthase alpha chain (596 aa).

233–240 (GPFGAGKT) is a binding site for ATP.

Belongs to the ATPase alpha/beta chains family.

The catalysed reaction is ATP + H2O + 4 H(+)(in) = ADP + phosphate + 5 H(+)(out). Functionally, produces ATP from ADP in the presence of a proton gradient across the membrane. The V-type alpha chain is a catalytic subunit. This chain is V-type ATP synthase alpha chain, found in Streptococcus gordonii (strain Challis / ATCC 35105 / BCRC 15272 / CH1 / DL1 / V288).